The sequence spans 260 residues: Phosphatidate cytidylyltransferase (260 aa).

7 consecutive transmembrane segments (helical) span residues 9 to 29, 46 to 66, 70 to 90, 102 to 122, 130 to 150, 172 to 192, and 196 to 216; these read IIALIVFLPILLKGGLVLMIF, MIKFVSVPGLISAVGLIIIML, AGPWVQVIQLKSLIAMSFIVL, FMDAAFCLMSVAYVGIGFMFF, LHYILYAFLIVWLTDTGAYLF, FIGGLFCSLIVPLAMLYFVDF, and VWILLGVTLILSLFGQLGDLV.

Belongs to the CDS family.

It is found in the cell membrane. The enzyme catalyses a 1,2-diacyl-sn-glycero-3-phosphate + CTP + H(+) = a CDP-1,2-diacyl-sn-glycerol + diphosphate. It functions in the pathway phospholipid metabolism; CDP-diacylglycerol biosynthesis; CDP-diacylglycerol from sn-glycerol 3-phosphate: step 3/3. In Staphylococcus aureus (strain COL), this protein is Phosphatidate cytidylyltransferase (cdsA).